The chain runs to 550 residues: Major fimbrium tip subunit FimE (550 aa).

Positions Met1–Ser21 are cleaved as a signal peptide. Cys22 carries N-palmitoyl cysteine lipidation. Cys22 carries S-diacylglycerol cysteine lipidation. A propeptide spanning residues Cys22–Arg51 is cleaved from the precursor.

This sequence belongs to the FimE family. As to quaternary structure, fimbriae are composed of a major, structural subunit and the minor components FimC, FimD and FimE. Identified in a complex composed of FimC, FimD and FimE (in vitro). Does not directly interact with host proteins, but only as a complex with FimC and FimD.

It localises to the fimbrium. The protein localises to the cell outer membrane. Functionally, probably a component of the fimbrium tip; required for incorporation of FimC and FimD into fimbriae. These long, filamentous pili are attached to the cell surface; they mediate biofilm formation, adhesion onto host cells and onto other bacteria that are part of the oral microbiome. They play an important role in invasion of periodontal tissues and are major virulence factors. FimC, FimD and FimE contribute to interaction with host CXCR4 and thereby down-regulate the TLR2-mediated host immune response. The polypeptide is Major fimbrium tip subunit FimE (Porphyromonas gingivalis (strain ATCC 33277 / DSM 20709 / CIP 103683 / JCM 12257 / NCTC 11834 / 2561)).